Reading from the N-terminus, the 423-residue chain is Diaminobutyrate--2-oxoglutarate transaminase (423 aa).

N6-(pyridoxal phosphate)lysine is present on Lys271.

This sequence belongs to the class-III pyridoxal-phosphate-dependent aminotransferase family. Requires pyridoxal 5'-phosphate as cofactor.

It catalyses the reaction L-2,4-diaminobutanoate + 2-oxoglutarate = L-aspartate 4-semialdehyde + L-glutamate. The protein operates within amine and polyamine biosynthesis; ectoine biosynthesis; L-ectoine from L-aspartate 4-semialdehyde: step 1/3. In terms of biological role, catalyzes reversively the conversion of L-aspartate beta-semialdehyde (ASA) to L-2,4-diaminobutyrate (DABA) by transamination with L-glutamate. The polypeptide is Diaminobutyrate--2-oxoglutarate transaminase (ectB) (Streptomyces coelicolor (strain ATCC BAA-471 / A3(2) / M145)).